A 634-amino-acid chain; its full sequence is Probable potassium transport system protein Kup (634 aa).

12 helical membrane passes run I21–L41, V58–V78, I110–I130, P148–C168, F180–I200, F217–T237, W258–L278, G296–I316, I348–F368, A377–A397, L408–I428, and D432–L452.

It belongs to the HAK/KUP transporter (TC 2.A.72) family.

The protein resides in the cell inner membrane. The catalysed reaction is K(+)(in) + H(+)(in) = K(+)(out) + H(+)(out). Its function is as follows. Transport of potassium into the cell. Likely operates as a K(+):H(+) symporter. The protein is Probable potassium transport system protein Kup of Xylella fastidiosa (strain Temecula1 / ATCC 700964).